The sequence spans 425 residues: Serine hydroxymethyltransferase (425 aa).

(6S)-5,6,7,8-tetrahydrofolate contacts are provided by residues Leu126 and 130 to 132; that span reads GHL. Lys234 carries the N6-(pyridoxal phosphate)lysine modification.

This sequence belongs to the SHMT family. Homodimer. It depends on pyridoxal 5'-phosphate as a cofactor.

Its subcellular location is the cytoplasm. The catalysed reaction is (6R)-5,10-methylene-5,6,7,8-tetrahydrofolate + glycine + H2O = (6S)-5,6,7,8-tetrahydrofolate + L-serine. It functions in the pathway one-carbon metabolism; tetrahydrofolate interconversion. It participates in amino-acid biosynthesis; glycine biosynthesis; glycine from L-serine: step 1/1. Functionally, catalyzes the reversible interconversion of serine and glycine with tetrahydrofolate (THF) serving as the one-carbon carrier. This reaction serves as the major source of one-carbon groups required for the biosynthesis of purines, thymidylate, methionine, and other important biomolecules. Also exhibits THF-independent aldolase activity toward beta-hydroxyamino acids, producing glycine and aldehydes, via a retro-aldol mechanism. The sequence is that of Serine hydroxymethyltransferase from Desulfotalea psychrophila (strain LSv54 / DSM 12343).